Reading from the N-terminus, the 155-residue chain is SsrA-binding protein (155 aa).

It belongs to the SmpB family.

It is found in the cytoplasm. In terms of biological role, required for rescue of stalled ribosomes mediated by trans-translation. Binds to transfer-messenger RNA (tmRNA), required for stable association of tmRNA with ribosomes. tmRNA and SmpB together mimic tRNA shape, replacing the anticodon stem-loop with SmpB. tmRNA is encoded by the ssrA gene; the 2 termini fold to resemble tRNA(Ala) and it encodes a 'tag peptide', a short internal open reading frame. During trans-translation Ala-aminoacylated tmRNA acts like a tRNA, entering the A-site of stalled ribosomes, displacing the stalled mRNA. The ribosome then switches to translate the ORF on the tmRNA; the nascent peptide is terminated with the 'tag peptide' encoded by the tmRNA and targeted for degradation. The ribosome is freed to recommence translation, which seems to be the essential function of trans-translation. This Alkaliphilus oremlandii (strain OhILAs) (Clostridium oremlandii (strain OhILAs)) protein is SsrA-binding protein.